A 266-amino-acid chain; its full sequence is Eukaryotic translation initiation factor 3 subunit J (266 aa).

Disordered regions lie at residues 1-142 and 215-243; these read MAPS…VSDS and MSNE…VSLV. A compositionally biased stretch (acidic residues) spans 26 to 44; sequence DEEEEDVLDSWDAAEDSEV. A coiled-coil region spans residues 40 to 99; sequence EDSEVEREKAAKAAEAKAKAEAEAAAKKKSKAQRIQEHKEERKKREEEDSSSESEEDEAE. Basic and acidic residues-rich tracts occupy residues 45–65 and 73–86; these read EREK…EAAA and RIQE…KREE. Residues 87 to 97 are compositionally biased toward acidic residues; it reads EDSSSESEEDE. 2 stretches are compositionally biased toward basic and acidic residues: residues 98–118 and 218–230; these read AERR…HAED and EKMR…DKGN.

This sequence belongs to the eIF-3 subunit J family. As to quaternary structure, component of the eukaryotic translation initiation factor 3 (eIF-3) complex.

The protein resides in the cytoplasm. In terms of biological role, component of the eukaryotic translation initiation factor 3 (eIF-3) complex, which is involved in protein synthesis of a specialized repertoire of mRNAs and, together with other initiation factors, stimulates binding of mRNA and methionyl-tRNAi to the 40S ribosome. The eIF-3 complex specifically targets and initiates translation of a subset of mRNAs involved in cell proliferation. The sequence is that of Eukaryotic translation initiation factor 3 subunit J (hcr1) from Aspergillus terreus (strain NIH 2624 / FGSC A1156).